The primary structure comprises 150 residues: Myeloid-derived growth factor homolog (150 aa).

Residues 1–22 form the signal peptide; sequence MTFLKYLLILCTIFLMVTNSLS.

Belongs to the MYDGF family.

The protein resides in the secreted. This chain is Myeloid-derived growth factor homolog, found in Dictyostelium discoideum (Social amoeba).